The following is a 491-amino-acid chain: Fatty acyl-CoA reductase 1 (491 aa).

The protein belongs to the fatty acyl-CoA reductase family. In terms of tissue distribution, expressed in the endodermal cell layer surrounding the central vasculature in roots. Expressed in the hilum region of seeds. Expressed in lateral root tips, cotyledons, the shoot apex, young leaves, petals, stamen filaments, and receptacle of siliques.

It catalyses the reaction a long-chain fatty acyl-CoA + 2 NADPH + 2 H(+) = a long-chain primary fatty alcohol + 2 NADP(+) + CoA. Catalyzes the reduction of fatty acyl-CoA to fatty alcohols. Catalyzes specifically the formation of C18:0 and C22:0 fatty alcohols. Provides the fatty alcohols required for synthesis of suberin in roots, seed coat and wound-induced leaf tissue. Provides the fatty alcohols required for synthesis of alkyl hydroxycinnamates in root waxes. This chain is Fatty acyl-CoA reductase 1, found in Arabidopsis thaliana (Mouse-ear cress).